Consider the following 187-residue polypeptide: Elongation factor P 1 (187 aa).

It belongs to the elongation factor P family.

Its subcellular location is the cytoplasm. Its pathway is protein biosynthesis; polypeptide chain elongation. Its function is as follows. Involved in peptide bond synthesis. Stimulates efficient translation and peptide-bond synthesis on native or reconstituted 70S ribosomes in vitro. Probably functions indirectly by altering the affinity of the ribosome for aminoacyl-tRNA, thus increasing their reactivity as acceptors for peptidyl transferase. This Geobacter sulfurreducens (strain ATCC 51573 / DSM 12127 / PCA) protein is Elongation factor P 1.